Here is an 88-residue protein sequence, read N- to C-terminus: Large ribosomal subunit protein bL27 (88 aa).

The protein belongs to the bacterial ribosomal protein bL27 family.

The chain is Large ribosomal subunit protein bL27 from Parabacteroides distasonis (strain ATCC 8503 / DSM 20701 / CIP 104284 / JCM 5825 / NCTC 11152).